Reading from the N-terminus, the 390-residue chain is MINRVVLFIMDSVGIGALPDADQFGDVGSNTLGNISKVEQGIALPNLTALGLGNIEDIQGVNPVESPKGAYGKSAEVSNGKDTTTGHWELVGLEVTEPFNTYPQGFPADVVENFEKQIGRKMLGNKPASGTVILDELGKEHMQTGHPIVYTSADSVFQIAAHEEVILLGELYKMCEIAREIMRGDHAVARVIARPFVGDPGNFIRTSNRRDYSLDPFGKTLLDIAKEAGKDVIGIGKIEDIFNGNGITEAIHTKDNMDGIDQTIAYLKKENKGIIFTNLVDFDSKYGHRRDPKGYKQALEEMDRRIPEILSHLNDEDLIIFTADHGNDPTFKGSDHTREYIPIVIYGKQVKAGVNIGTRKSFADIAATISDILNIDDTGNGESFKKFILE.

6 residues coordinate Mn(2+): Asp-11, Asp-283, His-288, Asp-324, His-325, and His-336.

It belongs to the phosphopentomutase family. Requires Mn(2+) as cofactor.

The protein resides in the cytoplasm. It carries out the reaction 2-deoxy-alpha-D-ribose 1-phosphate = 2-deoxy-D-ribose 5-phosphate. The catalysed reaction is alpha-D-ribose 1-phosphate = D-ribose 5-phosphate. Its pathway is carbohydrate degradation; 2-deoxy-D-ribose 1-phosphate degradation; D-glyceraldehyde 3-phosphate and acetaldehyde from 2-deoxy-alpha-D-ribose 1-phosphate: step 1/2. Isomerase that catalyzes the conversion of deoxy-ribose 1-phosphate (dRib-1-P) and ribose 1-phosphate (Rib-1-P) to deoxy-ribose 5-phosphate (dRib-5-P) and ribose 5-phosphate (Rib-5-P), respectively. This is Phosphopentomutase from Alkaliphilus metalliredigens (strain QYMF).